Reading from the N-terminus, the 270-residue chain is Outer membrane protein P.IIC (270 aa).

An N-terminal signal peptide occupies residues 1 to 25; sequence MQPAKNLLFSSLLFSSLLFSSAARA. The Extracellular portion of the chain corresponds to 26–35; sequence ASEDGGRGPY. Residues 36–44 form a beta stranded membrane-spanning segment; it reads VQADLAYAA. Over 45-76 the chain is Periplasmic; the sequence is ERITHDYPKPTGTGKNKISTVSDYFRNIRTHS. The chain crosses the membrane as a beta stranded span at residues 77-85; sequence VHPRVSVGY. The Extracellular portion of the chain corresponds to 86 to 89; that stretch reads DFGS. Residues 90–96 form a beta stranded membrane-spanning segment; that stretch reads WRIAADY. The Periplasmic segment spans residues 97 to 142; the sequence is ARYRKWNNNKYSVSIKELLRNDNSASGVRGHLNIQTQKTEHQENGT. A beta stranded membrane pass occupies residues 143-157; sequence FHAVSSLGLSTIYDF. Residues 158 to 162 lie on the Extracellular side of the membrane; it reads DTGSR. A beta stranded membrane pass occupies residues 163–173; the sequence is FKPYIGMRVAY. Topologically, residues 174-221 are periplasmic; it reads GHVRHQVRSVEQETEIITTYPSNGGGKVSLSSKMPPKSAHHQSNSIRR. A disordered region spans residues 194-217; that stretch reads PSNGGGKVSLSSKMPPKSAHHQSN. Residues 222–234 form a beta stranded membrane-spanning segment; sequence VGLGVIAGVGFDI. Over 235–237 the chain is Extracellular; that stretch reads TPN. A beta stranded transmembrane segment spans residues 238–246; it reads LTLDTGYRY. At 247-261 the chain is on the periplasmic side; the sequence is HNWGRLENTRFKTHE. A beta stranded transmembrane segment spans residues 262 to 270; sequence ASLGMRYRF.

This sequence belongs to the opacity porin family. In terms of assembly, homotrimer.

The protein localises to the cell outer membrane. Its function is as follows. This protein serves as a porin. This is Outer membrane protein P.IIC (piiC) from Neisseria gonorrhoeae.